The primary structure comprises 312 residues: Apulose-4-phosphate transketolase subunit B (312 aa).

It belongs to the transketolase family. In terms of assembly, probable heterodimer composed of AptA and AptB. Thiamine diphosphate serves as cofactor.

It catalyses the reaction apulose 4-phosphate + D-glyceraldehyde 3-phosphate = D-xylulose 5-phosphate + dihydroxyacetone phosphate. The protein operates within carbohydrate metabolism. Involved in catabolism of D-apiose. Catalyzes the transfer of the glycolaldehyde group from apulose-4-phosphate to D-glyceraldehyde 3-phosphate, generating dihydroxyacetone phosphate and D-xylulose-5-phosphate. This chain is Apulose-4-phosphate transketolase subunit B, found in Phocaeicola vulgatus (strain ATCC 8482 / DSM 1447 / JCM 5826 / CCUG 4940 / NBRC 14291 / NCTC 11154) (Bacteroides vulgatus).